The chain runs to 129 residues: Translation initiation factor 5A (129 aa).

A Hypusine modification is found at K36.

This sequence belongs to the eIF-5A family.

The protein resides in the cytoplasm. Functionally, functions by promoting the formation of the first peptide bond. The chain is Translation initiation factor 5A (eIF5A) from Methanobrevibacter smithii (strain ATCC 35061 / DSM 861 / OCM 144 / PS).